Reading from the N-terminus, the 30-residue chain is Trypsin inhibitor 4 (30 aa).

3 cysteine pairs are disulfide-bonded: Cys3–Cys20, Cys10–Cys22, and Cys16–Cys29.

It belongs to the protease inhibitor I7 (squash-type serine protease inhibitor) family.

The protein resides in the secreted. Its function is as follows. Inhibits trypsin. The polypeptide is Trypsin inhibitor 4 (Cucumis sativus (Cucumber)).